The sequence spans 171 residues: L-methionine sulfoximine/L-methionine sulfone acetyltransferase (171 aa).

An N-acetyltransferase domain is found at methionine 1–aspartate 163. Substrate-binding positions include arginine 72–phenylalanine 74 and glutamate 82–serine 84. Residues valine 85–valine 87, glycine 93–arginine 98, asparagine 124, and serine 133 each bind acetyl-CoA.

Homodimer.

The enzyme catalyses L-methionine sulfoximine + acetyl-CoA = N-acetyl-L-methionine sulfoximine + CoA + H(+). It catalyses the reaction L-methionine sulfone + acetyl-CoA = N-acetyl-L-methionine sulfone + CoA + H(+). In terms of biological role, plays a role in the resistance against the toxic effects of L-methionine sulfoximine (MSX), a rare amino acid which inhibits glutamine synthetase (GlnA). Catalyzes the acetylation of MSX. It can also use L-methionine sulfone (MSO). Also catalyzes the acylation of free L-amino acids using an acyl-CoA as acyl donor. This is L-methionine sulfoximine/L-methionine sulfone acetyltransferase (yncA) from Salmonella typhimurium (strain LT2 / SGSC1412 / ATCC 700720).